We begin with the raw amino-acid sequence, 283 residues long: Bifunctional protein FolD (283 aa).

Residues 163–165 (GRS), Ser188, and Ile229 each bind NADP(+).

Belongs to the tetrahydrofolate dehydrogenase/cyclohydrolase family. In terms of assembly, homodimer.

The catalysed reaction is (6R)-5,10-methylene-5,6,7,8-tetrahydrofolate + NADP(+) = (6R)-5,10-methenyltetrahydrofolate + NADPH. It catalyses the reaction (6R)-5,10-methenyltetrahydrofolate + H2O = (6R)-10-formyltetrahydrofolate + H(+). It participates in one-carbon metabolism; tetrahydrofolate interconversion. Its function is as follows. Catalyzes the oxidation of 5,10-methylenetetrahydrofolate to 5,10-methenyltetrahydrofolate and then the hydrolysis of 5,10-methenyltetrahydrofolate to 10-formyltetrahydrofolate. The protein is Bifunctional protein FolD of Campylobacter fetus subsp. fetus (strain 82-40).